An 85-amino-acid polypeptide reads, in one-letter code: Protein BTH_I0359 (85 aa).

This is Protein BTH_I0359 from Burkholderia thailandensis (strain ATCC 700388 / DSM 13276 / CCUG 48851 / CIP 106301 / E264).